The primary structure comprises 190 residues: Shikimate kinase (190 aa).

Residue 26–31 (GSGKST) participates in ATP binding. Ser30 is a Mg(2+) binding site. Substrate is bound by residues Asp48, Arg72, and Gly94. Arg133 contributes to the ATP binding site. Arg152 is a binding site for substrate.

It belongs to the shikimate kinase family. Monomer. Mg(2+) is required as a cofactor.

Its subcellular location is the cytoplasm. The enzyme catalyses shikimate + ATP = 3-phosphoshikimate + ADP + H(+). Its pathway is metabolic intermediate biosynthesis; chorismate biosynthesis; chorismate from D-erythrose 4-phosphate and phosphoenolpyruvate: step 5/7. Its function is as follows. Catalyzes the specific phosphorylation of the 3-hydroxyl group of shikimic acid using ATP as a cosubstrate. The chain is Shikimate kinase from Prochlorococcus marinus (strain SARG / CCMP1375 / SS120).